A 296-amino-acid polypeptide reads, in one-letter code: Probable endonuclease 4 (296 aa).

Zn(2+) contacts are provided by histidine 68, histidine 109, glutamate 144, aspartate 178, histidine 181, histidine 213, aspartate 226, histidine 228, and glutamate 258.

This sequence belongs to the AP endonuclease 2 family. It depends on Zn(2+) as a cofactor.

The catalysed reaction is Endonucleolytic cleavage to 5'-phosphooligonucleotide end-products.. Its function is as follows. Endonuclease IV plays a role in DNA repair. It cleaves phosphodiester bonds at apurinic or apyrimidinic (AP) sites, generating a 3'-hydroxyl group and a 5'-terminal sugar phosphate. This Staphylococcus aureus (strain MRSA252) protein is Probable endonuclease 4.